Reading from the N-terminus, the 534-residue chain is Multicopper oxidase LPR1 homolog 3 (534 aa).

The Cu cation site is built by His84 and His86. Residue Asn109 is glycosylated (N-linked (GlcNAc...) asparagine). Cu cation-binding residues include His133 and His135. The Plastocyanin-like domain occupies 219–291 (PFQAVQRRRY…VDFSLVVNPN (73 aa)). Residues Asn234, Asn291, Asn312, Asn323, Asn341, and Asn372 are each glycosylated (N-linked (GlcNAc...) asparagine). Residues His419, His422, and His424 each coordinate Cu cation. Asn450 carries N-linked (GlcNAc...) asparagine glycosylation. Cu cation is bound by residues His515, Cys516, His517, His521, and Met526.

It belongs to the multicopper oxidase family. Cu cation serves as cofactor. In terms of tissue distribution, expressed in roots and basal stems.

It localises to the endoplasmic reticulum membrane. Functionally, multicopper oxidase that may play a role in the maintenance of inorganic phosphate homeostasis. The chain is Multicopper oxidase LPR1 homolog 3 from Oryza sativa subsp. japonica (Rice).